The chain runs to 269 residues: Chymotrypsin-like elastase family member 2A (269 aa).

A signal peptide spans 1-16 (MIRALLLSTLVAGALS). Residues 17–28 (CGLPANLPQLPR) constitute a propeptide, activation peptide. The Peptidase S1 domain maps to 29-267 (VVGGEDARPN…YIDWINSVIA (239 aa)). Cys-58 and Cys-74 are joined by a disulfide. Catalysis depends on charge relay system residues His-73 and Asp-121. 3 disulfide bridges follow: Cys-155-Cys-222, Cys-186-Cys-202, and Cys-212-Cys-243. Ser-216 acts as the Charge relay system in catalysis.

The protein belongs to the peptidase S1 family. Elastase subfamily. In terms of assembly, interacts with CPA1. Interacts with SERPINA1. As to expression, pancreas.

It localises to the secreted. It carries out the reaction Preferential cleavage: Leu-|-Xaa, Met-|-Xaa and Phe-|-Xaa. Hydrolyzes elastin.. Elastase that enhances insulin signaling and might have a physiologic role in cellular glucose metabolism. Circulates in plasma and reduces platelet hyperactivation, triggers both insulin secretion and degradation, and increases insulin sensitivity. This chain is Chymotrypsin-like elastase family member 2A (CELA2A), found in Sus scrofa (Pig).